Reading from the N-terminus, the 242-residue chain is ATP synthase subunit a, chloroplastic (242 aa).

Transmembrane regions (helical) follow at residues 34-54 (GQVLVVVWFVLALLLLFAVLG), 93-113 (VPFIGTLFLFIFGCNWAGAII), 132-152 (INTTVALALLTSLAYFYAGLS), 188-210 (LFGNVLADELTITVLTSLVPLVI), and 222-242 (GSVQALIFSTLAAAYIAEALE).

The protein belongs to the ATPase A chain family. As to quaternary structure, F-type ATPases have 2 components, CF(1) - the catalytic core - and CF(0) - the membrane proton channel. CF(1) has five subunits: alpha(3), beta(3), gamma(1), delta(1), epsilon(1). CF(0) has four main subunits: a, b, b' and c.

The protein resides in the plastid. Its subcellular location is the chloroplast thylakoid membrane. Its function is as follows. Key component of the proton channel; it plays a direct role in the translocation of protons across the membrane. The protein is ATP synthase subunit a, chloroplastic of Trieres chinensis (Marine centric diatom).